A 185-amino-acid chain; its full sequence is Elongation factor P (185 aa).

The protein belongs to the elongation factor P family.

It is found in the cytoplasm. The protein operates within protein biosynthesis; polypeptide chain elongation. Functionally, involved in peptide bond synthesis. Stimulates efficient translation and peptide-bond synthesis on native or reconstituted 70S ribosomes in vitro. Probably functions indirectly by altering the affinity of the ribosome for aminoacyl-tRNA, thus increasing their reactivity as acceptors for peptidyl transferase. The protein is Elongation factor P of Desulfitobacterium hafniense (strain DSM 10664 / DCB-2).